A 142-amino-acid polypeptide reads, in one-letter code: Putative pre-16S rRNA nuclease (142 aa).

Belongs to the YqgF nuclease family.

Its subcellular location is the cytoplasm. Its function is as follows. Could be a nuclease involved in processing of the 5'-end of pre-16S rRNA. The sequence is that of Putative pre-16S rRNA nuclease from Blochmanniella floridana.